A 213-amino-acid polypeptide reads, in one-letter code: Transcription antitermination protein NusB (213 aa).

Belongs to the NusB family.

Involved in transcription antitermination. Required for transcription of ribosomal RNA (rRNA) genes. Binds specifically to the boxA antiterminator sequence of the ribosomal RNA (rrn) operons. In Picosynechococcus sp. (strain ATCC 27264 / PCC 7002 / PR-6) (Agmenellum quadruplicatum), this protein is Transcription antitermination protein NusB.